A 215-amino-acid polypeptide reads, in one-letter code: Cytochrome b6 (215 aa).

Residues 32 to 52 (IFYCLGGITLTCFLVQVATGF) form a helical membrane-spanning segment. A heme c-binding site is contributed by cysteine 35. Residues histidine 86 and histidine 100 each coordinate heme b. 3 helical membrane-spanning segments follow: residues 90 to 110 (ASMM…TGGF), 116 to 136 (LTWV…VTGY), and 186 to 206 (LHTF…FPMI). The heme b site is built by histidine 187 and histidine 202.

Belongs to the cytochrome b family. PetB subfamily. The 4 large subunits of the cytochrome b6-f complex are cytochrome b6, subunit IV (17 kDa polypeptide, PetD), cytochrome f and the Rieske protein, while the 4 small subunits are PetG, PetL, PetM and PetN. The complex functions as a dimer. The cofactor is heme b. Requires heme c as cofactor.

The protein resides in the plastid. The protein localises to the chloroplast thylakoid membrane. Component of the cytochrome b6-f complex, which mediates electron transfer between photosystem II (PSII) and photosystem I (PSI), cyclic electron flow around PSI, and state transitions. The polypeptide is Cytochrome b6 (Liriodendron tulipifera (Tuliptree)).